Consider the following 415-residue polypeptide: UDP-N-acetylglucosamine 1-carboxyvinyltransferase 1 (415 aa).

23–24 (KN) is a binding site for phosphoenolpyruvate. Arg92 serves as a coordination point for UDP-N-acetyl-alpha-D-glucosamine. Cys116 serves as the catalytic Proton donor. The residue at position 116 (Cys116) is a 2-(S-cysteinyl)pyruvic acid O-phosphothioketal. Residues 121–125 (RPIDL), Asp304, and Val326 contribute to the UDP-N-acetyl-alpha-D-glucosamine site.

The protein belongs to the EPSP synthase family. MurA subfamily.

The protein localises to the cytoplasm. The enzyme catalyses phosphoenolpyruvate + UDP-N-acetyl-alpha-D-glucosamine = UDP-N-acetyl-3-O-(1-carboxyvinyl)-alpha-D-glucosamine + phosphate. It participates in cell wall biogenesis; peptidoglycan biosynthesis. In terms of biological role, cell wall formation. Adds enolpyruvyl to UDP-N-acetylglucosamine. This Caldanaerobacter subterraneus subsp. tengcongensis (strain DSM 15242 / JCM 11007 / NBRC 100824 / MB4) (Thermoanaerobacter tengcongensis) protein is UDP-N-acetylglucosamine 1-carboxyvinyltransferase 1.